Here is a 392-residue protein sequence, read N- to C-terminus: N-acyl-phosphatidylethanolamine-hydrolyzing phospholipase D (392 aa).

An N-acetylmethionine modification is found at Met-1. Over residues 1–16 (MDENETNQLLMTSNQY) the composition is skewed to polar residues. Residues 1–39 (MDENETNQLLMTSNQYPKEAVRKRQNSRNSGGSDSSRFS) form a disordered region. Over residues 27-36 (SRNSGGSDSS) the composition is skewed to low complexity. 2 residues coordinate Zn(2+): His-183 and His-185. Tyr-186 contacts an N-acyl-1,2-diacyl-sn-glycero-3-phosphoethanolamine. Residues Asp-187, His-188, and His-251 each contribute to the Zn(2+) site. Residues Lys-254 and Met-258 each coordinate deoxycholate. Asp-282 contacts Zn(2+). Residue His-319 participates in an N-acyl-1,2-diacyl-sn-glycero-3-phosphoethanolamine binding. His-341 provides a ligand contact to Zn(2+). Ala-346 contributes to the deoxycholate binding site.

The protein belongs to the NAPE-PLD family. As to quaternary structure, homodimer. Bile acids promote the assembly of inactive monomers into an active dimer and enable catalysis. It depends on Zn(2+) as a cofactor. In terms of tissue distribution, widely expressed. Highest expression in brain, kidney and testis (at protein level). Expressed in adipose tissue (at protein level).

It is found in the golgi apparatus membrane. The protein resides in the early endosome membrane. It localises to the nucleus envelope. The protein localises to the nucleus. Its subcellular location is the nucleoplasm. The enzyme catalyses an N-acyl-1,2-diacyl-sn-glycero-3-phosphoethanolamine + H2O = an N-acylethanolamine + a 1,2-diacyl-sn-glycero-3-phosphate + H(+). It carries out the reaction N-butanoyl-1-hexadecanoyl-2-(9Z,12Z-octadecadienoyl)-sn-glycero-3-phosphoethanolamine + H2O = N-butanoyl ethanolamine + 1-hexadecanoyl-2-(9Z,12Z-octadecadienoyl)-sn-glycero-3-phosphate + H(+). The catalysed reaction is N-hexanoyl-1-hexadecanoyl-2-(9Z,12Z-octadecadienoyl)-sn-glycero-3-phosphoethanolamine + H2O = N-hexanoyl ethanolamine + 1-hexadecanoyl-2-(9Z,12Z-octadecadienoyl)-sn-glycero-3-phosphate + H(+). It catalyses the reaction N-octanoyl-1-hexadecanoyl-2-(9Z,12Z-octadecadienoyl)-sn-glycero-3-phosphoethanolamine + H2O = N-octanoyl ethanolamine + 1-hexadecanoyl-2-(9Z,12Z-octadecadienoyl)-sn-glycero-3-phosphate + H(+). The enzyme catalyses N-decanoyl-1-hexadecanoyl-2-(9Z,12Z-octadecadienoyl)-sn-glycero-3-phosphoethanolamine + H2O = N-decanoyl ethanolamine + 1-hexadecanoyl-2-(9Z,12Z-octadecadienoyl)-sn-glycero-3-phosphate + H(+). It carries out the reaction N-dodecanoyl-1,2-di-(9Z-octadecenoyl)-sn-glycero-3-phosphoethanolamine + H2O = N-dodecanoylethanolamine + 1,2-di-(9Z-octadecenoyl)-sn-glycero-3-phosphate + H(+). The catalysed reaction is N-tetradecanoyl-1,2-di-(9Z-octadecenoyl)-sn-glycero-3-phosphoethanolamine + H2O = N-tetradecanoylethanolamine + 1,2-di-(9Z-octadecenoyl)-sn-glycero-3-phosphate + H(+). It catalyses the reaction N-hexadecanoyl-1,2-di-(9Z-octadecenoyl)-sn-glycero-3-phosphoethanolamine + H2O = N-hexadecanoylethanolamine + 1,2-di-(9Z-octadecenoyl)-sn-glycero-3-phosphate + H(+). The enzyme catalyses N,1-dihexadecanoyl-2-(9Z,12Z-octadecadienoyl)-sn-glycero-3-phosphoethanolamine + H2O = 1-hexadecanoyl-2-(9Z,12Z-octadecadienoyl)-sn-glycero-3-phosphate + N-hexadecanoylethanolamine + H(+). It carries out the reaction N-octadecanoyl-1,2-di-(9Z-octadecenoyl)-sn-glycero-3-phosphoethanolamine + H2O = N-octadecanoyl ethanolamine + 1,2-di-(9Z-octadecenoyl)-sn-glycero-3-phosphate + H(+). The catalysed reaction is N,1,2-tri-(9Z-octadecenoyl)-sn-glycero-3-phosphoethanolamine + H2O = N-(9Z-octadecenoyl) ethanolamine + 1,2-di-(9Z-octadecenoyl)-sn-glycero-3-phosphate + H(+). It catalyses the reaction N-(5Z,8Z,11Z,14Z-eicosatetraenoyl)-1,2-diacyl-sn-glycero-3-phosphoethanolamine + H2O = N-(5Z,8Z,11Z,14Z-eicosatetraenoyl)-ethanolamine + a 1,2-diacyl-sn-glycero-3-phosphate + H(+). The enzyme catalyses N-(5Z,8Z,11Z,14Z-eicosatetraenoyl)-1,2-di-(9Z-octadecenoyl)-sn-glycero-3-phosphoethanolamine + H2O = N-(5Z,8Z,11Z,14Z-eicosatetraenoyl)-ethanolamine + 1,2-di-(9Z-octadecenoyl)-sn-glycero-3-phosphate + H(+). It carries out the reaction 1-O-(1Z-octadecenoyl)-2-(9Z-octadecenoyl)-sn-glycero-3-phospho-N-hexadecanoyl-ethanolamine + H2O = 1-O-(1Z-octadecenoyl)-2-(9Z-octadecenoyl)-sn-glycero-3-phosphate + N-hexadecanoylethanolamine + H(+). The catalysed reaction is N,1-diacyl-sn-glycero-3-phosphoethanolamine + H2O = an N-acylethanolamine + a 1-acyl-sn-glycero-3-phosphate + H(+). It catalyses the reaction N,1-dihexadecanoyl-sn-glycero-3-phosphoethanolamine + H2O = N-hexadecanoylethanolamine + 1-hexadecanoyl-sn-glycero-3-phosphate + H(+). The enzyme catalyses N-(5Z,8Z,11Z,14Z-eicosatetraenoyl)-1-(9Z-octadecenoyl)-sn-glycero-3-phosphoethanolamine + H2O = N-(5Z,8Z,11Z,14Z-eicosatetraenoyl)-ethanolamine + 1-(9Z-octadecenoyl)-sn-glycero-3-phosphate + H(+). Activated by divalent cations. Activated by bile acids. Its function is as follows. D-type phospholipase that hydrolyzes N-acyl-phosphatidylethanolamines (NAPEs) to produce bioactive N-acylethanolamines/fatty acid ethanolamides (NAEs/FAEs) and phosphatidic acid. Cleaves the terminal phosphodiester bond of diacyl- and alkenylacyl-NAPEs, primarily playing a role in the generation of long-chain saturated and monounsaturated NAEs in the brain. May control NAPE homeostasis in dopaminergic neuron membranes and regulate neuron survival, partly through RAC1 activation. As a regulator of lipid metabolism in the adipose tissue, mediates the crosstalk between adipocytes, gut microbiota and immune cells to control body temperature and weight. In particular, regulates energy homeostasis by promoting cold-induced brown or beige adipocyte differentiation program to generate heat from fatty acids and glucose. Has limited D-type phospholipase activity toward N-acyl lyso-NAPEs. The sequence is that of N-acyl-phosphatidylethanolamine-hydrolyzing phospholipase D (NAPEPLD) from Bos taurus (Bovine).